Reading from the N-terminus, the 746-residue chain is NAD(P)H-quinone oxidoreductase subunit 5, chloroplastic (746 aa).

16 helical membrane passes run 9-29, 40-60, 89-109, 125-145, 147-167, 185-205, 221-241, 258-278, 280-300, 327-347, 354-374, 396-416, 425-445, 547-567, 608-628, and 723-743; these read WIIP…LLLF, WTFL…YLSI, IDPL…LVLI, FAYM…SNLI, VYFF…FWFT, GDFG…SFEF, VNLL…IAKS, TPIS…FLVA, LLPL…IGII, LGYM…FHLI, ALLF…VGYS, TAFL…CFWS, LLFS…TAFY, ILFP…IGIP, FSVS…KPFY, and YLFL…FFYF.

It belongs to the complex I subunit 5 family. NDH is composed of at least 16 different subunits, 5 of which are encoded in the nucleus.

It is found in the plastid. The protein resides in the chloroplast thylakoid membrane. It carries out the reaction a plastoquinone + NADH + (n+1) H(+)(in) = a plastoquinol + NAD(+) + n H(+)(out). It catalyses the reaction a plastoquinone + NADPH + (n+1) H(+)(in) = a plastoquinol + NADP(+) + n H(+)(out). Functionally, NDH shuttles electrons from NAD(P)H:plastoquinone, via FMN and iron-sulfur (Fe-S) centers, to quinones in the photosynthetic chain and possibly in a chloroplast respiratory chain. The immediate electron acceptor for the enzyme in this species is believed to be plastoquinone. Couples the redox reaction to proton translocation, and thus conserves the redox energy in a proton gradient. In Lepidium virginicum (Virginia pepperweed), this protein is NAD(P)H-quinone oxidoreductase subunit 5, chloroplastic (ndhF).